A 237-amino-acid chain; its full sequence is MSNAYKRVLLKLSGEALMGDDAFGINRATIERMVADIAEVVRLGTQLAVVIGGGNIFRGVAGGAAGMDRATADYMGMLATMMNALALQDAMRHAGIEARVQSALRMDQVVEPYIRPRAIRQLEEGKVVIFAAGTGNPFFTTDTAAALRGSEVGAEVVLKATKVDGVYSADPKKDPSATRYSSISFDEAIGRNLQVMDATAFALCRDQKLPIRVFSINKPGALKRIVQGEDEGTLVHV.

11 to 14 contacts ATP; it reads KLSG. UMP is bound at residue Gly53. Gly54 and Arg58 together coordinate ATP. UMP-binding positions include Asp73 and 134 to 141; that span reads TGNPFFTT. 3 residues coordinate ATP: Thr161, Tyr167, and Asp170.

This sequence belongs to the UMP kinase family. Homohexamer.

Its subcellular location is the cytoplasm. The enzyme catalyses UMP + ATP = UDP + ADP. The protein operates within pyrimidine metabolism; CTP biosynthesis via de novo pathway; UDP from UMP (UMPK route): step 1/1. With respect to regulation, inhibited by UTP. Functionally, catalyzes the reversible phosphorylation of UMP to UDP. The chain is Uridylate kinase from Burkholderia thailandensis (strain ATCC 700388 / DSM 13276 / CCUG 48851 / CIP 106301 / E264).